The sequence spans 199 residues: UPF0637 protein YsbB (199 aa).

This sequence belongs to the UPF0637 family.

This Lactococcus lactis subsp. lactis (strain IL1403) (Streptococcus lactis) protein is UPF0637 protein YsbB (ysbB).